The chain runs to 194 residues: Putative manganese efflux pump MntP (194 aa).

Transmembrane regions (helical) follow at residues 3 to 23 (PITI…AAIG), 37 to 57 (LYVA…GWLL), 65 to 85 (IAAF…IHMI), 112 to 132 (LAAT…SLAF), 137 to 157 (IGIV…FGVM), and 170 to 190 (AEIV…YEHL).

It belongs to the MntP (TC 9.B.29) family.

It is found in the cell inner membrane. In terms of biological role, probably functions as a manganese efflux pump. This chain is Putative manganese efflux pump MntP, found in Xylella fastidiosa (strain M12).